We begin with the raw amino-acid sequence, 367 residues long: Glutamate 5-kinase (367 aa).

Position 10 (Lys-10) interacts with ATP. Substrate-binding residues include Ser-50, Asp-137, and Asn-149. 169–170 contacts ATP; the sequence is TD. The PUA domain maps to 275-353; sequence AGEITVDEGA…QQIDAILGYE (79 aa).

This sequence belongs to the glutamate 5-kinase family.

Its subcellular location is the cytoplasm. It catalyses the reaction L-glutamate + ATP = L-glutamyl 5-phosphate + ADP. Its pathway is amino-acid biosynthesis; L-proline biosynthesis; L-glutamate 5-semialdehyde from L-glutamate: step 1/2. Its function is as follows. Catalyzes the transfer of a phosphate group to glutamate to form L-glutamate 5-phosphate. This chain is Glutamate 5-kinase, found in Salmonella paratyphi B (strain ATCC BAA-1250 / SPB7).